The following is a 386-amino-acid chain: tRNA-specific 2-thiouridylase MnmA (386 aa).

ATP is bound by residues 9 to 16 (GMSGGVDS) and M35. The interval 95–97 (NPD) is interaction with target base in tRNA. C100 serves as the catalytic Nucleophile. A disulfide bridge links C100 with C196. G124 is a binding site for ATP. Positions 146 to 148 (KDQ) are interaction with tRNA. Catalysis depends on C196, which acts as the Cysteine persulfide intermediate. The interaction with tRNA stretch occupies residues 308–309 (RY).

Belongs to the MnmA/TRMU family.

It is found in the cytoplasm. It catalyses the reaction S-sulfanyl-L-cysteinyl-[protein] + uridine(34) in tRNA + AH2 + ATP = 2-thiouridine(34) in tRNA + L-cysteinyl-[protein] + A + AMP + diphosphate + H(+). In terms of biological role, catalyzes the 2-thiolation of uridine at the wobble position (U34) of tRNA, leading to the formation of s(2)U34. This Burkholderia thailandensis (strain ATCC 700388 / DSM 13276 / CCUG 48851 / CIP 106301 / E264) protein is tRNA-specific 2-thiouridylase MnmA.